A 133-amino-acid chain; its full sequence is MVMLDTLANALTTIYNNEVRGNKEAIIMPASKLIANVLRIMQKEGYVGEFEYIDDGRWGKIRVRLLGRINKCGAIKPRVSVSYRDLLVLPEHLRRFLPSKDVGILIISTSQGLMTHKEAIQKRVGGIAIAYVY.

It belongs to the universal ribosomal protein uS8 family. Part of the 30S ribosomal subunit.

Functionally, one of the primary rRNA binding proteins, it binds directly to 16S rRNA central domain where it helps coordinate assembly of the platform of the 30S subunit. The polypeptide is Small ribosomal subunit protein uS8 (Ignicoccus hospitalis (strain KIN4/I / DSM 18386 / JCM 14125)).